Reading from the N-terminus, the 226-residue chain is Uracil-DNA glycosylase (226 aa).

The active-site Proton acceptor is Asp64.

It belongs to the uracil-DNA glycosylase (UDG) superfamily. UNG family.

The protein resides in the cytoplasm. The catalysed reaction is Hydrolyzes single-stranded DNA or mismatched double-stranded DNA and polynucleotides, releasing free uracil.. Functionally, excises uracil residues from the DNA which can arise as a result of misincorporation of dUMP residues by DNA polymerase or due to deamination of cytosine. The polypeptide is Uracil-DNA glycosylase (Vibrio campbellii (strain ATCC BAA-1116)).